A 335-amino-acid polypeptide reads, in one-letter code: Vitamin B12 import system permease protein BtuC (335 aa).

8 helical membrane passes run 25 to 45, 67 to 87, 94 to 113, 117 to 139, 153 to 173, 243 to 263, 281 to 301, and 309 to 329; these read LVVM…VWIW, MAVI…QALF, PGLL…AVLL, LLPI…SILL, LLVG…AVYF, VLAI…ISFI, RLLA…DVVA, and ELPI…WLLI.

Belongs to the binding-protein-dependent transport system permease family. FecCD subfamily. The complex is composed of two ATP-binding proteins (BtuD), two transmembrane proteins (BtuC) and a solute-binding protein (BtuF).

The protein localises to the cell inner membrane. Part of the ABC transporter complex BtuCDF involved in vitamin B12 import. Involved in the translocation of the substrate across the membrane. The polypeptide is Vitamin B12 import system permease protein BtuC (Yersinia pseudotuberculosis serotype O:1b (strain IP 31758)).